The following is a 338-amino-acid chain: Glyceraldehyde-3-phosphate dehydrogenase 1 (338 aa).

Residues 13-14 and Gly111 contribute to the NAD(+) site; that span reads TI. A D-glyceraldehyde 3-phosphate-binding site is contributed by 140–142; it reads SCN. Catalysis depends on Cys141, which acts as the Nucleophile. Arg169 serves as a coordination point for NAD(+). Position 195–196 (195–196) interacts with D-glyceraldehyde 3-phosphate; it reads HG. Position 300 (Gln300) interacts with NAD(+).

Belongs to the glyceraldehyde-3-phosphate dehydrogenase family. In terms of assembly, homotetramer.

The protein resides in the cytoplasm. It carries out the reaction D-glyceraldehyde 3-phosphate + phosphate + NADP(+) = (2R)-3-phospho-glyceroyl phosphate + NADPH + H(+). The enzyme catalyses D-glyceraldehyde 3-phosphate + phosphate + NAD(+) = (2R)-3-phospho-glyceroyl phosphate + NADH + H(+). It participates in carbohydrate degradation; glycolysis; pyruvate from D-glyceraldehyde 3-phosphate: step 1/5. The protein is Glyceraldehyde-3-phosphate dehydrogenase 1 of Methanosarcina barkeri (strain Fusaro / DSM 804).